Reading from the N-terminus, the 276-residue chain is Hydroxyethylthiazole kinase (276 aa).

Position 48 (Met-48) interacts with substrate. ATP-binding residues include Arg-124 and Thr-175. Position 202 (Gly-202) interacts with substrate.

The protein belongs to the Thz kinase family. Mg(2+) serves as cofactor.

It carries out the reaction 5-(2-hydroxyethyl)-4-methylthiazole + ATP = 4-methyl-5-(2-phosphooxyethyl)-thiazole + ADP + H(+). It functions in the pathway cofactor biosynthesis; thiamine diphosphate biosynthesis; 4-methyl-5-(2-phosphoethyl)-thiazole from 5-(2-hydroxyethyl)-4-methylthiazole: step 1/1. Its function is as follows. Catalyzes the phosphorylation of the hydroxyl group of 4-methyl-5-beta-hydroxyethylthiazole (THZ). In Clostridium beijerinckii (strain ATCC 51743 / NCIMB 8052) (Clostridium acetobutylicum), this protein is Hydroxyethylthiazole kinase.